A 700-amino-acid chain; its full sequence is Polyribonucleotide nucleotidyltransferase (700 aa).

Residues D484 and D490 each contribute to the Mg(2+) site. A KH domain is found at 551–610; the sequence is PRVIRMVVDPEKIREIIGPGGKTISKIIAETGVKIDIEEDGRLYITASDLRSGERAKQMI. An S1 motif domain is found at 620 to 688; the sequence is GEIYLGKVLR…KLGRISLSRK (69 aa).

It belongs to the polyribonucleotide nucleotidyltransferase family. Requires Mg(2+) as cofactor.

The protein resides in the cytoplasm. It carries out the reaction RNA(n+1) + phosphate = RNA(n) + a ribonucleoside 5'-diphosphate. Functionally, involved in mRNA degradation. Catalyzes the phosphorolysis of single-stranded polyribonucleotides processively in the 3'- to 5'-direction. This Thermoanaerobacter pseudethanolicus (strain ATCC 33223 / 39E) (Clostridium thermohydrosulfuricum) protein is Polyribonucleotide nucleotidyltransferase.